The sequence spans 429 residues: Keratin, type I cytoskeletal 47 kDa (429 aa).

Low complexity predominate over residues 1–16 (MTSYRSSSASYYSGSS). The disordered stretch occupies residues 1–20 (MTSYRSSSASYYSGSSSKGG). The segment at 1-69 (MTSYRSSSAS…EAASSSFGGN (69 aa)) is head. Residues 70–105 (EKHAMQNLNDRLASYLEKVRALEATNSDLEGKIRNW) are coil 1A. The IF rod domain occupies 70-385 (EKHAMQNLND…RLLEGELGQV (316 aa)). Residues 106–127 (YDKQSDAGIGAGSKDYSKYFEI) form a linker 1 region. The segment at 128–219 (IAELRNKIRA…KNHEEEMSHA (92 aa)) is coil 1B. A linker 12 region spans residues 220–242 (KSQSAGKVSVEMDAALGVDLTSI). The tract at residues 243-381 (LNNMRADYEI…QTYRRLLEGE (139 aa)) is coil 2. Residues 382-429 (LGQVTTVANTSSVESKTESSSTSTTRTRMVKTIVEEVVDGKVVSSRVE) form a tail region. The tract at residues 389 to 408 (ANTSSVESKTESSSTSTTRT) is disordered. Positions 391 to 408 (TSSVESKTESSSTSTTRT) are enriched in low complexity.

This sequence belongs to the intermediate filament family. As to quaternary structure, heterotetramer of two type I and two type II keratins.

The sequence is that of Keratin, type I cytoskeletal 47 kDa (xk81a1) from Xenopus laevis (African clawed frog).